A 258-amino-acid polypeptide reads, in one-letter code: MVLIRVIANLLILQLSNAQKSSELVIGGDECNITEHRFLVEIFNSSGLFCGGTLIDQEWVLSAAHCDMRNMRIYLGVHNEGVQHADQQRRFAREKFFCLSSRNYTKWDKDIMLIRLNRPVNNSEHIAPLSLPSNPPSVGSVCRIMGWGTITSPNATFPDVPHCANINLFNYTVCRGAHAGLPATSRTLCAGVLQGGIDTCGGDSGGPLICNGTFQGIVSWGGHPCAQPGEPALYTKVFDYLPWIQSIIAGNTTATCPP.

The first 18 residues, 1 to 18, serve as a signal peptide directing secretion; it reads MVLIRVIANLLILQLSNA. The propeptide occupies 19–24; it reads QKSSEL. The Peptidase S1 domain occupies 25–249; it reads VIGGDECNIT…YLPWIQSIIA (225 aa). 6 cysteine pairs are disulfide-bonded: cysteine 31–cysteine 163, cysteine 50–cysteine 66, cysteine 98–cysteine 256, cysteine 142–cysteine 210, cysteine 174–cysteine 189, and cysteine 200–cysteine 225. N-linked (GlcNAc...) asparagine glycans are attached at residues asparagine 32 and asparagine 44. Histidine 65 serves as the catalytic Charge relay system. The N-linked (GlcNAc...) asparagine glycan is linked to asparagine 103. Aspartate 110 (charge relay system) is an active-site residue. N-linked (GlcNAc...) asparagine glycosylation occurs at asparagine 121. A glycan (O-linked (GalNAc...) serine) is linked at serine 133. N-linked (GlcNAc...) asparagine glycosylation is found at asparagine 154 and asparagine 170. The Charge relay system role is filled by serine 204. 2 N-linked (GlcNAc...) asparagine glycosylation sites follow: asparagine 211 and asparagine 251. O-linked (GalNAc...) threonine glycosylation occurs at threonine 255.

It belongs to the peptidase S1 family. Snake venom subfamily. Monomer. Post-translationally, N- and O-glycosylated. The glycosylation has a stabilizing effect on the protein. However, the removal of part of the carbohydrates enhances the proteolytic activity of the SVSP towards human and rat fibrinogen. Expressed by the venom gland.

It is found in the secreted. With respect to regulation, inhibited by diisopropylfluorophosphate (DFP), but not by SBTI, Antithrombin III/heparin and BPTI, probably due to steric hindrance caused by its huge carbohydrate moietie. In terms of biological role, snake venom serine protease that has a potent and selective fibrinogenolytic activity. Preferentially cleaves the alpha-chain (FGA) of human and rat fibrinogen at Arg-|-Gly bonds, and slowly digests the beta-chain (FGB). In vivo, completely avoids thrombus formation induced in rat, decreases the fibrinogen plasma level and prolonges the recalcification time. Possesses esterolytic and amidolytic activities. This Bothrops jararaca (Jararaca) protein is Snake venom serine protease BPA.